Reading from the N-terminus, the 96-residue chain is Prokineticin Bm8-a (96 aa).

The N-terminal stretch at 1–19 is a signal peptide; it reads MKCFAQIVVLLLVIAFSHG. 5 disulfides stabilise this stretch: Cys26/Cys38, Cys32/Cys50, Cys37/Cys78, Cys60/Cys86, and Cys80/Cys95.

This sequence belongs to the AVIT (prokineticin) family. Expressed by the skin glands.

It localises to the secreted. Potent agonist for both PKR1/PROKR1 and PKR2/PROKR2, and inducer of a potent and long-lasting hyperalgesia. Also potentiates capsaicin-induced TRPV1 current, when tested on DRG neurons. At subnanomolar concentrations, this protein both induces potent chemotaxis of macrophages and stimulates LPS-induced production of the pro-inflammatory cytokines IL-1 and IL-12. In vivo, potently stimulates the contraction of the guinea-pig gastrointestinal (GI) smooth muscle (nanomolar concentration). This chain is Prokineticin Bm8-a, found in Bombina maxima (Giant fire-bellied toad).